The primary structure comprises 450 residues: Thiamine biosynthesis regulatory protein (450 aa).

The segment covering 1–12 (MVNSKRQQRSKK) has biased composition (basic residues). The interval 1–23 (MVNSKRQQRSKKVASSSKVPPTK) is disordered. The segment covering 13–23 (VASSSKVPPTK) has biased composition (low complexity). A DNA-binding region (zn(2)-C6 fungal-type) is located at residues 30-57 (CWACRFKKRRCDENRPICSLCAKHGDNC). Residues 210-234 (TDQLPSPGHSMSSAEETTTAALSSP) are disordered.

It localises to the nucleus. Functionally, positive regulator of thiamine biosynthesis. In Saccharomyces cerevisiae (strain ATCC 204508 / S288c) (Baker's yeast), this protein is Thiamine biosynthesis regulatory protein (THI2).